Here is a 367-residue protein sequence, read N- to C-terminus: Peptide chain release factor 2 (367 aa).

Q254 carries the post-translational modification N5-methylglutamine.

The protein belongs to the prokaryotic/mitochondrial release factor family. Post-translationally, methylated by PrmC. Methylation increases the termination efficiency of RF2.

The protein localises to the cytoplasm. Peptide chain release factor 2 directs the termination of translation in response to the peptide chain termination codons UGA and UAA. The polypeptide is Peptide chain release factor 2 (Acidovorax ebreus (strain TPSY) (Diaphorobacter sp. (strain TPSY))).